The sequence spans 663 residues: Polyunsaturated fatty acid lipoxygenase ALOX15 (663 aa).

The PLAT domain occupies 2–115; that stretch reads GLYRVRVSTG…ILSLPEGTAR (114 aa). The Lipoxygenase domain occupies 116–663; it reads TVVDDPQGLF…PSRVENSVAI (548 aa). Positions 361, 366, 541, 545, and 663 each coordinate Fe cation.

Belongs to the lipoxygenase family. As to quaternary structure, interacts with PEBP1; in response to IL13/interleukin-13, prevents the interaction of PEBP1 with RAF1 to activate the ERK signaling cascade. It depends on Fe cation as a cofactor.

Its subcellular location is the cytoplasm. The protein resides in the cytosol. The protein localises to the cell membrane. It localises to the lipid droplet. It catalyses the reaction (5Z,8Z,11Z,14Z)-eicosatetraenoate + O2 = (12S)-hydroperoxy-(5Z,8Z,10E,14Z)-eicosatetraenoate. The enzyme catalyses (5Z,8Z,11Z,14Z)-eicosatetraenoate + O2 = (15S)-hydroperoxy-(5Z,8Z,11Z,13E)-eicosatetraenoate. The catalysed reaction is (9Z,12Z)-octadecadienoate + O2 = (13S)-hydroperoxy-(9Z,11E)-octadecadienoate. It carries out the reaction (5Z,8Z,11Z,14Z)-eicosatetraenoate + 2 O2 = (14R,15S)-dihydroperoxy-(5Z,8Z,10E,12E)-eicosatetraenoate. It catalyses the reaction (5Z,8Z,11Z,14Z)-eicosatetraenoate + 2 O2 = (8S,15S)-dihydroperoxy-(5Z,9E,11Z,13E)-eicosatetraenoate. The enzyme catalyses (14S,15R)-epoxy-(5Z,8Z,11Z)-eicosatrienoate + O2 = (8S)-hydroperoxy-(14S,15R)-epoxy-(5Z,9E,11Z)-eicosatrienoate. The catalysed reaction is (14S,15R)-epoxy-(5Z,8Z,11Z)-eicosatrienoate + O2 = (12S)-hydroperoxy-(14S,15R)-epoxy-(5Z,8Z,10E)-eicosatrienoate. It carries out the reaction (14R,15S)-epoxy-(5Z,8Z,11Z)-eicosatrienoate + O2 = (5S)-hydroperoxy-(14R,15S)-epoxy-(6E,8Z,11Z)-eicosatrienoate. It catalyses the reaction (14R,15S)-epoxy-(5Z,8Z,11Z)-eicosatrienoate + O2 = (12S)-hydroperoxy-(14R,15S)-epoxy-(5Z,8Z,10E)-eicosatrienoate. The enzyme catalyses (15R)-hydroperoxy-(5Z,8Z,11Z,13E)-eicosatetraenoate = 15-oxo-(5Z,8Z,11Z,13E)-eicosatetraenoate + H2O. The catalysed reaction is (15S)-hydroperoxy-(5Z,8Z,11Z,13E)-eicosatetraenoate = (14S,15S)-epoxy-(5Z,8Z,10E,12E)-eicosatetraenoate + H2O. It carries out the reaction (12S)-hydroperoxy-(5Z,8Z,10E,14Z)-eicosatetraenoate = (8S)-hydroxy-(11S,12S)-epoxy-(5Z,9E,14Z)-eicosatrienoate. It catalyses the reaction (4Z,7Z,10Z,13Z,16Z,19Z)-docosahexaenoate + O2 = 14-hydroperoxy-(4Z,7Z,10Z,12E,16Z,19Z)-docosahexaenoate. The enzyme catalyses (4Z,7Z,10Z,13Z,16Z)-docosapentaenoate + O2 = 14-hydroperoxy-(4Z,7Z,10Z,12E,16Z)-docosapentaenoate. The catalysed reaction is (7Z,10Z,13Z,16Z,19Z)-docosapentaenoate + O2 = 14-hydroperoxy-(7Z,10Z,12E,16Z,19Z)-docosapentaenoate. It carries out the reaction (4Z,7Z,10Z,13Z,16Z,19Z)-docosahexaenoate + O2 = (14S)-hydroperoxy-(4Z,7Z,10Z,12E,16Z,19Z)-docosahexaenoate. It catalyses the reaction (4Z,7Z,10Z,13Z,16Z,19Z)-docosahexaenoate + O2 = (17S)-hydroperoxy-(4Z,7Z,10Z,13Z,15E,19Z)-docosahexaenoate. The enzyme catalyses (7S)-hydroperoxy-(4Z,8E,10Z,13Z,16Z,19Z)-docosahexaenoate + O2 = (7S,14S)-dihydroperoxy-(4Z,8E,10Z,12E,16Z,19Z)-docosahexaenoate. The catalysed reaction is (7S)-hydroperoxy-(4Z,8E,10Z,13Z,16Z,19Z)-docosahexaenoate + O2 = (7S,17S)-dihydroperoxy-(4Z,8E,10Z,13Z,15E,19Z)-docosahexaenoate. It carries out the reaction (4Z,7Z,10Z,13Z,16Z,19Z)-docosahexaenoate + O2 = (11S)-hydroperoxy-(4Z,7Z,9E,13Z,16Z,19Z)-docosahexaenoate. It catalyses the reaction N-(5Z,8Z,11Z,14Z)-eicosatetraenoyl-taurine + O2 = N-(12S)-hydroperoxy-(5Z,8Z,10E,14Z)-eicosatetraenoyl-taurine. The enzyme catalyses N-(5Z,8Z,11Z,14Z)-eicosatetraenoyl-gamma-aminobutanoate + O2 = N-(12S)-hydroperoxy-(5Z,8Z,10E,14Z)-eicosatetraenoyl-gamma-aminobutanoate. The catalysed reaction is N-(5Z,8Z,11Z,14Z)-eicosatetraenoyl-glycine + O2 = N-(12S)-hydroperoxy-(5Z,8Z,10E,14Z)-eicosatetraenoyl-glycine. It carries out the reaction N-(5Z,8Z,11Z,14Z)-eicosatetraenoyl-L-alanine + O2 = N-(12S)-hydroperoxy-(5Z,8Z,10E,14Z)-eicosatetraenoyl-alanine. It catalyses the reaction N-(5Z,8Z,11Z,14Z)-eicosatetraenoyl-taurine + O2 = N-(15S)-hydroperoxy-(5Z,8Z,11Z,13E)-eicosatetraenoyl-taurine. The enzyme catalyses N-(5Z,8Z,11Z,14Z)-eicosatetraenoyl-gamma-aminobutanoate + O2 = N-(15S)-hydroperoxy-(5Z,8Z,11Z,13E)-eicosatetraenoyl-gamma-aminobutanoate. The catalysed reaction is N-(5Z,8Z,11Z,14Z)-eicosatetraenoyl-glycine + O2 = N-(15S)-hydroperoxy-(5Z,8Z,11Z,13E)-eicosatetraenoyl-glycine. It carries out the reaction N-(5Z,8Z,11Z,14Z)-eicosatetraenoyl-L-alanine + O2 = N-(15S)-hydroperoxy-(5Z,8Z,11Z,13E)-eicosatetraenoyl-alanine. Its pathway is lipid metabolism; hydroperoxy eicosatetraenoic acid biosynthesis. In terms of biological role, non-heme iron-containing dioxygenase that catalyzes the stereo-specific peroxidation of free and esterified polyunsaturated fatty acids generating a spectrum of bioactive lipid mediators. It inserts peroxyl groups at C12 or C15 of arachidonate ((5Z,8Z,11Z,14Z)-eicosatetraenoate) producing both 12-hydroperoxyeicosatetraenoate/12-HPETE and 15-hydroperoxyeicosatetraenoate/15-HPETE. It may then act on 12-HPETE to produce hepoxilins, which may show pro-inflammatory properties. Can also peroxidize linoleate ((9Z,12Z)-octadecadienoate) to 13-hydroperoxyoctadecadienoate. May participate in the sequential oxidations of DHA ((4Z,7Z,10Z,13Z,16Z,19Z)-docosahexaenoate) to generate specialized pro-resolving mediators (SPMs)like resolvin D5 ((7S,17S)-diHPDHA) and (7S,14S)-diHPDHA, that actively down-regulate the immune response and have anti-aggregation properties with platelets. Can convert epoxy fatty acids to hydroperoxy-epoxides derivatives followed by an intramolecular nucleophilic substitution leading to the formation of monocyclic endoperoxides. Plays an important role during the maintenance of self-tolerance by peroxidizing membrane-bound phosphatidylethanolamine which can then signal the sorting process for clearance of apoptotic cells during inflammation and prevent an autoimmune response. In addition to its role in the immune and inflammatory responses, this enzyme may play a role in epithelial wound healing in the cornea through production of lipoxin A4 (LXA(4)) and docosahexaenoic acid-derived neuroprotectin D1 (NPD1; 10R,17S-HDHA), both lipid autacoids exhibit anti-inflammatory and neuroprotective properties. Furthermore, it may regulate actin polymerization which is crucial for several biological processes such as the phagocytosis of apoptotic cells. It is also implicated in the generation of endogenous ligands for peroxisome proliferator activated receptor (PPAR-gamma), hence modulating macrophage development and function. It may also exert a negative effect on skeletal development by regulating bone mass through this pathway. As well as participates in ER stress and downstream inflammation in adipocytes, pancreatic islets, and liver. Finally, it is also involved in the cellular response to IL13/interleukin-13. In Sus scrofa (Pig), this protein is Polyunsaturated fatty acid lipoxygenase ALOX15.